Reading from the N-terminus, the 208-residue chain is ATP phosphoribosyltransferase (208 aa).

This sequence belongs to the ATP phosphoribosyltransferase family. Short subfamily. Heteromultimer composed of HisG and HisZ subunits.

The protein resides in the cytoplasm. The catalysed reaction is 1-(5-phospho-beta-D-ribosyl)-ATP + diphosphate = 5-phospho-alpha-D-ribose 1-diphosphate + ATP. Its pathway is amino-acid biosynthesis; L-histidine biosynthesis; L-histidine from 5-phospho-alpha-D-ribose 1-diphosphate: step 1/9. Its function is as follows. Catalyzes the condensation of ATP and 5-phosphoribose 1-diphosphate to form N'-(5'-phosphoribosyl)-ATP (PR-ATP). Has a crucial role in the pathway because the rate of histidine biosynthesis seems to be controlled primarily by regulation of HisG enzymatic activity. The protein is ATP phosphoribosyltransferase of Hydrogenovibrio crunogenus (strain DSM 25203 / XCL-2) (Thiomicrospira crunogena).